The sequence spans 92 residues: Small ribosomal subunit protein bS6 (92 aa).

This sequence belongs to the bacterial ribosomal protein bS6 family.

Functionally, binds together with bS18 to 16S ribosomal RNA. In Clostridioides difficile (strain 630) (Peptoclostridium difficile), this protein is Small ribosomal subunit protein bS6.